The following is a 224-amino-acid chain: uncharacterized protein (224 aa).

Transmembrane regions (helical) follow at residues 32 to 52, 60 to 80, 100 to 120, 130 to 150, and 162 to 182; these read ILTLCQLLSPSMLVLHYPLVV, LFTNYLYAGTGFDFIMNIYFF, IIYLVKVALLIDAFSLISGLG, AIAYNWSLFNSFSKIQFLFGF, and LGFSFLTGGLPSLVVLGFGII.

This sequence belongs to the derlin family.

It localises to the endoplasmic reticulum membrane. This is an uncharacterized protein from Schizosaccharomyces pombe (strain 972 / ATCC 24843) (Fission yeast).